A 105-amino-acid polypeptide reads, in one-letter code: UPF0145 protein lpg0197 (105 aa).

It belongs to the UPF0145 family.

The polypeptide is UPF0145 protein lpg0197 (Legionella pneumophila subsp. pneumophila (strain Philadelphia 1 / ATCC 33152 / DSM 7513)).